The sequence spans 278 residues: MGIRKYKPTTPGRRGSSVADFVEITRSEPEKSLVRPLSKTGGRNSSGRITTRHIGGGHKRAYRLIDFRRHDKDGVPAKVAHIEYDPNRTARIALLHYVDGEKRYIIAPAKLKQGDRIENGPEADIKPGNNLPLRNIPVGTVIHAIEIRPGGGAKIARSAGASVQLVAREGRFAQLRMPSGEIRNVDVRCRATIGEVGNAEQSNINWGKAGRMRWKGKRPTVRGVAMNPIDHPHGGGEGKTSGGRHPVSPWGQPEGRTRRPGKESDKLIVRRRRTGKKR.

Disordered stretches follow at residues 29–53 and 223–278; these read PEKSLVRPLSKTGGRNSSGRITTRH and GVAM…GKKR. Residues 255–268 are compositionally biased toward basic and acidic residues; it reads GRTRRPGKESDKLI. The span at 269–278 shows a compositional bias: basic residues; sequence VRRRRTGKKR.

Belongs to the universal ribosomal protein uL2 family. In terms of assembly, part of the 50S ribosomal subunit. Forms a bridge to the 30S subunit in the 70S ribosome.

Functionally, one of the primary rRNA binding proteins. Required for association of the 30S and 50S subunits to form the 70S ribosome, for tRNA binding and peptide bond formation. It has been suggested to have peptidyltransferase activity; this is somewhat controversial. Makes several contacts with the 16S rRNA in the 70S ribosome. The sequence is that of Large ribosomal subunit protein uL2 from Kineococcus radiotolerans (strain ATCC BAA-149 / DSM 14245 / SRS30216).